The following is a 297-amino-acid chain: Virulence genes transcriptional activator SpvR (297 aa).

Residues 1-61 (MDFLINKKLK…IRKNGTLIPT (61 aa)) form the HTH lysR-type domain. The H-T-H motif DNA-binding region spans 21–40 (FSIATSVLYITRTPLSRVIS).

It belongs to the LysR transcriptional regulatory family.

Its subcellular location is the cytoplasm. Functionally, positive regulator for the plasmid-encoded virulence factors SpvA, SpvB, and SpvC. This is Virulence genes transcriptional activator SpvR (spvR) from Salmonella dublin.